The following is a 226-amino-acid chain: MNPIVINRLQRKLGYTFNHQELLQQALTHRSASSKHNERLEFLGDSILSFVIANALYHRFPRVDEGDMSRMRATLVRGNTLAELAREFDLGECLRLGPGELKSGGFRRESILADTVEALIGGVFLDSNIQTVEQLILNWYKTRLDEISPGDKQKDPKTRLQEYLQGHHLPLPSYLVVQVRGEAHDQEFTIHCQVSGLSEPVVGTGSSRRKAEQAAAEQALKKLELE.

Residues 6–128 enclose the RNase III domain; it reads INRLQRKLGY…LIGGVFLDSN (123 aa). E41 is a Mg(2+) binding site. D45 is a catalytic residue. Mg(2+) is bound by residues D114 and E117. Residue E117 is part of the active site. Positions 155–225 constitute a DRBM domain; the sequence is DPKTRLQEYL…AEQALKKLEL (71 aa).

The protein belongs to the ribonuclease III family. Homodimer. The cofactor is Mg(2+).

The protein resides in the cytoplasm. The catalysed reaction is Endonucleolytic cleavage to 5'-phosphomonoester.. Digests double-stranded RNA. Involved in the processing of primary rRNA transcript to yield the immediate precursors to the large and small rRNAs (23S and 16S). Processes some mRNAs, and tRNAs when they are encoded in the rRNA operon. Processes pre-crRNA and tracrRNA of type II CRISPR loci if present in the organism. The protein is Ribonuclease 3 of Salmonella typhi.